We begin with the raw amino-acid sequence, 48 residues long: Large ribosomal subunit protein bL33A (48 aa).

The protein belongs to the bacterial ribosomal protein bL33 family.

This Metamycoplasma arthritidis (strain 158L3-1) (Mycoplasma arthritidis) protein is Large ribosomal subunit protein bL33A.